Reading from the N-terminus, the 486-residue chain is ATP synthase subunit beta 2 (486 aa).

166-173 (GGAGVGKT) is a binding site for ATP.

Belongs to the ATPase alpha/beta chains family. As to quaternary structure, F-type ATPases have 2 components, CF(1) - the catalytic core - and CF(0) - the membrane proton channel. CF(1) has five subunits: alpha(3), beta(3), gamma(1), delta(1), epsilon(1). CF(0) has three main subunits: a(1), b(2) and c(9-12). The alpha and beta chains form an alternating ring which encloses part of the gamma chain. CF(1) is attached to CF(0) by a central stalk formed by the gamma and epsilon chains, while a peripheral stalk is formed by the delta and b chains.

It is found in the cell inner membrane. It carries out the reaction ATP + H2O + 4 H(+)(in) = ADP + phosphate + 5 H(+)(out). Produces ATP from ADP in the presence of a proton gradient across the membrane. The catalytic sites are hosted primarily by the beta subunits. The polypeptide is ATP synthase subunit beta 2 (Gluconobacter oxydans (strain 621H) (Gluconobacter suboxydans)).